A 571-amino-acid chain; its full sequence is Serine/threonine-protein kinase Nek7 (571 aa).

The Protein kinase domain maps to 19–277 (YHVVEQVRRG…LRNPSLQPYL (259 aa)). ATP-binding positions include 25–33 (VRRGKSSSD) and Lys-48. The Proton acceptor role is filled by Asp-144. 2 disordered regions span residues 298–321 (SPKD…SREK) and 338–363 (TETG…ETKR). The segment covering 312–321 (FGKERVSREK) has biased composition (basic and acidic residues). Positions 342–351 (SSSSSQPASS) are enriched in low complexity.

Belongs to the protein kinase superfamily. NEK Ser/Thr protein kinase family. NIMA subfamily.

It carries out the reaction L-seryl-[protein] + ATP = O-phospho-L-seryl-[protein] + ADP + H(+). It catalyses the reaction L-threonyl-[protein] + ATP = O-phospho-L-threonyl-[protein] + ADP + H(+). Functionally, may be involved in plant development processes. This Arabidopsis thaliana (Mouse-ear cress) protein is Serine/threonine-protein kinase Nek7 (NEK7).